A 105-amino-acid chain; its full sequence is Ferredoxin-2 (105 aa).

The 91-residue stretch at 4–94 (YQVEVIYQGQ…DLKIETHKED (91 aa)) folds into the 2Fe-2S ferredoxin-type domain. Positions 40, 45, 48, and 78 each coordinate [2Fe-2S] cluster.

Belongs to the 2Fe2S plant-type ferredoxin family. As to quaternary structure, forms a complex with heterodimeric ferredoxin-thioredoxin reductase (FTR) and thioredoxin. Requires [2Fe-2S] cluster as cofactor.

Ferredoxins are iron-sulfur proteins that transfer electrons in a wide variety of metabolic reactions. This Synechococcus sp. (strain ATCC 27144 / PCC 6301 / SAUG 1402/1) (Anacystis nidulans) protein is Ferredoxin-2 (petF2).